A 523-amino-acid polypeptide reads, in one-letter code: La-related protein 1C (523 aa).

Low complexity predominate over residues 1 to 16 (MASATSNNPASSSMSP). Disordered regions lie at residues 1–52 (MASA…VRGE) and 95–313 (AAGD…VRHP). The residue at position 2 (Ala-2) is an N-acetylalanine. The span at 22 to 31 (NHGSPTASVA) shows a compositional bias: polar residues. 2 stretches are compositionally biased toward low complexity: residues 32 to 44 (QSPR…VSSP) and 146 to 169 (SNKS…ASSS). Position 33 is a phosphoserine (Ser-33). 2 stretches are compositionally biased toward polar residues: residues 206–270 (QRNG…NGNH) and 282–305 (HGNQ…SQRG). The HTH La-type RNA-binding domain occupies 363–452 (HYQDPPLHMK…RDNWQNWVLR (90 aa)). The segment at 474-523 (GNLSVDQSSADPIGGSSSQLQPTEALSDDQQQSSSTAPVSNHNAPDGANR) is disordered. Residues 477-516 (SVDQSSADPIGGSSSQLQPTEALSDDQQQSSSTAPVSNHN) show a composition bias toward polar residues.

Belongs to the LARP family. Age-dependent accumulation in rosette leaves.

It is found in the cytoplasm. In terms of biological role, promotes leaf senescence mediated by abscisic acid (ABA), salicylic acid (SA) and jasmonic acid (MeJA), probably though the induction of expression of senescence-associated genes (SAGs) and defense-related genes. The protein is La-related protein 1C (LARP1C) of Arabidopsis thaliana (Mouse-ear cress).